The following is a 177-amino-acid chain: Large ribosomal subunit protein uL6 (177 aa).

It belongs to the universal ribosomal protein uL6 family. As to quaternary structure, part of the 50S ribosomal subunit.

Functionally, this protein binds to the 23S rRNA, and is important in its secondary structure. It is located near the subunit interface in the base of the L7/L12 stalk, and near the tRNA binding site of the peptidyltransferase center. The protein is Large ribosomal subunit protein uL6 of Pseudomonas putida (strain W619).